The chain runs to 235 residues: Aspartate/glutamate leucyltransferase (235 aa).

This sequence belongs to the R-transferase family. Bpt subfamily.

Its subcellular location is the cytoplasm. It carries out the reaction N-terminal L-glutamyl-[protein] + L-leucyl-tRNA(Leu) = N-terminal L-leucyl-L-glutamyl-[protein] + tRNA(Leu) + H(+). It catalyses the reaction N-terminal L-aspartyl-[protein] + L-leucyl-tRNA(Leu) = N-terminal L-leucyl-L-aspartyl-[protein] + tRNA(Leu) + H(+). Functions in the N-end rule pathway of protein degradation where it conjugates Leu from its aminoacyl-tRNA to the N-termini of proteins containing an N-terminal aspartate or glutamate. The protein is Aspartate/glutamate leucyltransferase of Pseudomonas putida (strain GB-1).